Reading from the N-terminus, the 440-residue chain is Ribosomal protein uS12 methylthiotransferase RimO (440 aa).

An MTTase N-terminal domain is found at 6–116 (PKVGFVSLGC…VVTAVHEVVP (111 aa)). Residues Cys15, Cys51, Cys80, Cys149, Cys153, and Cys156 each contribute to the [4Fe-4S] cluster site. The region spanning 135-373 (LTPRHYAYLK…MAHQQAISAA (239 aa)) is the Radical SAM core domain. Residues 376 to 440 (QLKVGKEIEV…DEYDLWAELV (65 aa)) enclose the TRAM domain.

Belongs to the methylthiotransferase family. RimO subfamily. It depends on [4Fe-4S] cluster as a cofactor.

It localises to the cytoplasm. It catalyses the reaction L-aspartate(89)-[ribosomal protein uS12]-hydrogen + (sulfur carrier)-SH + AH2 + 2 S-adenosyl-L-methionine = 3-methylsulfanyl-L-aspartate(89)-[ribosomal protein uS12]-hydrogen + (sulfur carrier)-H + 5'-deoxyadenosine + L-methionine + A + S-adenosyl-L-homocysteine + 2 H(+). Its function is as follows. Catalyzes the methylthiolation of an aspartic acid residue of ribosomal protein uS12. The protein is Ribosomal protein uS12 methylthiotransferase RimO of Pseudomonas aeruginosa (strain ATCC 15692 / DSM 22644 / CIP 104116 / JCM 14847 / LMG 12228 / 1C / PRS 101 / PAO1).